The following is a 269-amino-acid chain: tRNA pseudouridine synthase A (269 aa).

Asp55 acts as the Nucleophile in catalysis. Residue Tyr111 participates in substrate binding.

Belongs to the tRNA pseudouridine synthase TruA family.

It catalyses the reaction uridine(38/39/40) in tRNA = pseudouridine(38/39/40) in tRNA. Its function is as follows. Formation of pseudouridine at positions 38, 39 and 40 in the anticodon stem and loop of transfer RNAs. The sequence is that of tRNA pseudouridine synthase A from Methanosarcina acetivorans (strain ATCC 35395 / DSM 2834 / JCM 12185 / C2A).